The chain runs to 217 residues: Small ribosomal subunit protein uS3 (217 aa).

The KH type-2 domain occupies 38 to 106 (IRKFLKKRLS…KVTLDIQEVR (69 aa)).

The protein belongs to the universal ribosomal protein uS3 family. As to quaternary structure, part of the 30S ribosomal subunit. Forms a tight complex with proteins S10 and S14.

Functionally, binds the lower part of the 30S subunit head. Binds mRNA in the 70S ribosome, positioning it for translation. The chain is Small ribosomal subunit protein uS3 from Desulfotalea psychrophila (strain LSv54 / DSM 12343).